The primary structure comprises 358 residues: Alpha-ketoglutarate-dependent L-arginine hydroxylase (358 aa).

The interval 1–21 is disordered; the sequence is MTESPTTHHGAAPPDSVATPV. Residues 117–135 form a helical membrane-spanning segment; sequence LSFLLMLYAGLLGDVFGWA. L-arginine is bound at residue 156 to 158; the sequence is LVS. 2 residues coordinate Fe cation: histidine 168 and glutamate 170. Threonine 194 contacts 2-oxoglutarate. Residue 268 to 270 participates in L-arginine binding; it reads DGD. Residue histidine 316 coordinates Fe cation. 2-oxoglutarate-binding residues include arginine 330 and arginine 334. L-arginine is bound at residue arginine 334.

This sequence belongs to the clavaminate synthase family. Requires Fe cation as cofactor.

Its subcellular location is the membrane. It catalyses the reaction L-arginine + 2-oxoglutarate + O2 = (2S,3S)-hydroxyarginine + succinate + CO2. It participates in antibiotic biosynthesis. Functionally, involved in the biosynthesis of capreomycidine, an unusual amino acid used by non-ribosomal peptide synthases (NRPS) to make the tuberactinomycin class of peptide antibiotics such as viomycin and capreomycin. Catalyzes the stereospecific hydroxylation of the C3 of (2S)-arginine to generate (3S)-hydroxy-(2S)-arginine. Usually clavaminic acid synthase-like oxygenases catalyze the formation of threo diastereomers, however VioC produces the erythro diastereomer of beta-carbon-hydroxylated L-arginine. It exerts a broad substrate specificity by accepting the analogs L-homoarginine and L-canavanine for the beta-carbon hydroxylation. The sequence is that of Alpha-ketoglutarate-dependent L-arginine hydroxylase (vioC) from Streptomyces vinaceus.